The sequence spans 159 residues: Capsid protein (159 aa).

The protein belongs to the virgaviridae capsid protein family.

The protein localises to the virion. Functionally, capsid protein self-assembles to form rod-shaped virions about 18 nm in diameter with a central canal enclosing the viral genomic RNA. This chain is Capsid protein (CP), found in Tomato mosaic virus (strain Kazakh K1) (ToMV).